The primary structure comprises 851 residues: MAKANVSPGMQQYLDIKKDYPDAFLLFRMGDFYELFYEDAVKAAQILEIGLTSRNKNADNPIPMAGVPYHSVQQYIDVLIDLGHKVAIAEQMEDPKQAVGVVKREVVQVITPGTAVDSSRPDSPNNFLVAVDFDGKAYGLSYMDVSTGEFFATDLADFASVKSEIQNLKAKEVLLGFELSEEEQAILVKQLNLLLSFEMTALEDSPLIDHQLTAVELSAAGKLLHYVHQTQLRELSHLQALVHYDIKDYLQMSYATKSSLDLLENARTGKKHGSLYWLLDETKTAMGMRLLRAWIDRPLVTSEAILERQEIIQVFLNAFIERTDLSDSLKGVYDIERLSSRVSFGKANPKDLLQLGHTLAKVPYIKAILEAFNSPYLDKLVNQIDTLPELEHLIRSAIDPDAPATINEGNIIRTGFDERLDHYRKVMREGTGWIADIETKERQASGISNLKIDYNKKDGYYFHVTNSNLGMVPDHFFRKATLKNSERYGTAELAKIEGQMLEAREESSSLEYDIFMRIRAQVETYIDRLQQLAKALATVDVLQSLAVVAEKNHYVRPLFNQESKIAIDNGRHAVVEKVLGVQEYIPNSISFGPQTSIQLITGPNMSGKSTYMRQLALTVIMAQIGSFVAAESASLPLFDAIFTRIGAADDLISGQSTFMVEMMEANHAIKRATPHSLILFDELGRGTATYDGMALAQSIIEYIHDRVGAKTMFATHYHELTELSTKLTKLVNVHVATLEKDGNVTFLHKIAEGPADKSYGIHVARIAGLPEDLLARADTVLTKLEAQSQARESVLSTTEVRETQQLANQQLSLFTDDGSSSEIIKRLESVDVMNLTPIQAMTVLYELKKLL.

Position 602–609 (602–609 (GPNMSGKS)) interacts with ATP.

This sequence belongs to the DNA mismatch repair MutS family.

Functionally, this protein is involved in the repair of mismatches in DNA. It is possible that it carries out the mismatch recognition step. This protein has a weak ATPase activity. The sequence is that of DNA mismatch repair protein MutS from Streptococcus equi subsp. equi (strain 4047).